Here is a 499-residue protein sequence, read N- to C-terminus: Protein flp (499 aa).

Helical transmembrane passes span 6 to 26, 389 to 409, 433 to 453, and 471 to 491; these read LYFLSISIIILVAISIAIYIT, FNIVTVLMTTLILLAFIFSAY, LTLCLCIAIALILYALPYLIL, and LTLTTAFIALFSMLITLLLIL.

It is found in the cell membrane. Its function is as follows. Its precise function is unknown. Has no penicillin-binding activity and is not involved in methicillin resistance. The polypeptide is Protein flp (flp) (Staphylococcus aureus (strain MRSA252)).